The following is a 67-amino-acid chain: Beta-defensin 123 (67 aa).

The first 20 residues, 1-20, serve as a signal peptide directing secretion; that stretch reads MKLLLLTLTVLLLLSQLTPG. Intrachain disulfides connect Cys25-Cys52, Cys32-Cys46, and Cys36-Cys53.

The protein belongs to the beta-defensin family.

The protein localises to the secreted. Its function is as follows. Has antibacterial activity. The chain is Beta-defensin 123 (DEFB123) from Pongo pygmaeus (Bornean orangutan).